Reading from the N-terminus, the 251-residue chain is Aspartate/glutamate leucyltransferase (251 aa).

It belongs to the R-transferase family. Bpt subfamily.

The protein localises to the cytoplasm. It carries out the reaction N-terminal L-glutamyl-[protein] + L-leucyl-tRNA(Leu) = N-terminal L-leucyl-L-glutamyl-[protein] + tRNA(Leu) + H(+). The catalysed reaction is N-terminal L-aspartyl-[protein] + L-leucyl-tRNA(Leu) = N-terminal L-leucyl-L-aspartyl-[protein] + tRNA(Leu) + H(+). Its function is as follows. Functions in the N-end rule pathway of protein degradation where it conjugates Leu from its aminoacyl-tRNA to the N-termini of proteins containing an N-terminal aspartate or glutamate. This is Aspartate/glutamate leucyltransferase from Nitrosospira multiformis (strain ATCC 25196 / NCIMB 11849 / C 71).